Consider the following 1488-residue polypeptide: Chromosome partition protein MukB (1488 aa).

34–41 (GGNGAGKS) is an ATP binding site. Coiled-coil stretches lie at residues 326 to 418 (LEAD…QYNQ), 444 to 472 (LDTF…QTAH), and 509 to 602 (RHLA…RRAP). The flexible hinge stretch occupies residues 666–783 (PGGAEDQRLN…SLPIFGRAAR (118 aa)). 3 coiled-coil regions span residues 835–923 (EAEI…AKLE), 977–1116 (EMLS…AKAG), and 1209–1265 (VEAI…LQSV). The segment at 1049–1074 (ADSGAEERARQRRDELHAQLSNNRSR) is disordered. A compositionally biased stretch (basic and acidic residues) spans 1051–1065 (SGAEERARQRRDELH).

Belongs to the SMC family. MukB subfamily. As to quaternary structure, homodimerization via its hinge domain. Binds to DNA via its C-terminal region. Interacts, and probably forms a ternary complex, with MukE and MukF via its C-terminal region. The complex formation is stimulated by calcium or magnesium. Interacts with tubulin-related protein FtsZ.

The protein resides in the cytoplasm. It is found in the nucleoid. In terms of biological role, plays a central role in chromosome condensation, segregation and cell cycle progression. Functions as a homodimer, which is essential for chromosome partition. Involved in negative DNA supercoiling in vivo, and by this means organize and compact chromosomes. May achieve or facilitate chromosome segregation by condensation DNA from both sides of a centrally located replisome during cell division. The protein is Chromosome partition protein MukB of Salmonella agona (strain SL483).